A 331-amino-acid polypeptide reads, in one-letter code: Ribonuclease Z (331 aa).

Positions 56, 58, 60, 61, 162, 235, and 297 each coordinate Zn(2+). Asp60 serves as the catalytic Proton acceptor.

It belongs to the RNase Z family. In terms of assembly, homodimer. It depends on Zn(2+) as a cofactor.

It carries out the reaction Endonucleolytic cleavage of RNA, removing extra 3' nucleotides from tRNA precursor, generating 3' termini of tRNAs. A 3'-hydroxy group is left at the tRNA terminus and a 5'-phosphoryl group is left at the trailer molecule.. Its function is as follows. Zinc phosphodiesterase, which displays some tRNA 3'-processing endonuclease activity. Probably involved in tRNA maturation, by removing a 3'-trailer from precursor tRNA. This is Ribonuclease Z (rnz) from Deinococcus radiodurans (strain ATCC 13939 / DSM 20539 / JCM 16871 / CCUG 27074 / LMG 4051 / NBRC 15346 / NCIMB 9279 / VKM B-1422 / R1).